We begin with the raw amino-acid sequence, 188 residues long: M-phase phosphoprotein 6 homolog (188 aa).

Residues 93–188 are disordered; the sequence is EENVDEKDVS…NKNKKKKKRN (96 aa). A compositionally biased stretch (basic and acidic residues) spans 120-149; it reads LTERERRKQELVSKKAEASRKMEVKAPAKE. Phosphoserine is present on Ser167. Residues 174-188 are compositionally biased toward basic residues; the sequence is RKTKKNKNKKKKKRN.

It belongs to the MPP6 family. Associates with the RNA exosome complex.

It is found in the nucleus. Functionally, RNA-binding protein that associates with the RNA exosome complex. This is M-phase phosphoprotein 6 homolog from Schizosaccharomyces pombe (strain 972 / ATCC 24843) (Fission yeast).